The sequence spans 896 residues: Desmocollin-3 (896 aa).

The first 26 residues, 1-26 (MAAPGSGAPCAELCRQLLLTLVVFSF), serve as a signal peptide directing secretion. The propeptide occupies 27 to 134 (ACEACKKEIF…KETVLRRSKR (108 aa)). Cadherin domains are found at residues 135 to 242 (RWAP…HPIF), 243 to 354 (TEAV…LPTF), 355 to 471 (RQNA…GPEC), 472 to 579 (SPEV…EILQ), and 580 to 690 (DYLV…ILGK). At 135–690 (RWAPIPCSMQ…RRSADVILGK (556 aa)) the chain is on the extracellular side. A glycan (N-linked (GlcNAc...) asparagine) is linked at asparagine 165. Asparagine 391, asparagine 546, and asparagine 629 each carry an N-linked (GlcNAc...) asparagine glycan. Residues 691–711 (WAILAILLGIALLFSILLTLV) form a helical membrane-spanning segment. The Cytoplasmic portion of the chain corresponds to 712-896 (CGIVSARNKK…AALAKTCTKR (185 aa)).

May form homodimers. Interacts with DSG1; there is evidence to suggest that the interaction promotes cell-cell adhesion of keratinocytes. In terms of tissue distribution, expressed in stratified epithelia only, such as the epidermis, tongue, esophagus and rumen (at protein level).

Its subcellular location is the cell membrane. The protein localises to the cell junction. The protein resides in the desmosome. It localises to the cytoplasm. Its function is as follows. A component of desmosome cell-cell junctions which are required for positive regulation of cellular adhesion. Required for cell-cell adhesion in the epidermis, as a result required for the maintenance of the dermal cohesion and the dermal barrier function. Required for cell-cell adhesion of epithelial cell layers surrounding the telogen hair club, as a result plays an important role in telogen hair shaft anchorage. Essential for successful completion of embryo compaction and embryo development. In Bos taurus (Bovine), this protein is Desmocollin-3 (DSC3).